The primary structure comprises 282 residues: Protein NEOXANTHIN-DEFICIENT 1 (282 aa).

In terms of biological role, required for neoxanthin biosynthesis. Probably not involved directly in the enzymatic conversion of violaxanthin to neoxanthin. Is necessary but not sufficient for neoxanthin synthesis. The chain is Protein NEOXANTHIN-DEFICIENT 1 from Arabidopsis thaliana (Mouse-ear cress).